The sequence spans 108 residues: Nucleoid-associated protein BQ02190 (108 aa).

Belongs to the YbaB/EbfC family. Homodimer.

It localises to the cytoplasm. The protein resides in the nucleoid. In terms of biological role, binds to DNA and alters its conformation. May be involved in regulation of gene expression, nucleoid organization and DNA protection. This is Nucleoid-associated protein BQ02190 from Bartonella quintana (strain Toulouse) (Rochalimaea quintana).